Consider the following 95-residue polypeptide: Protein TusB (95 aa).

Belongs to the DsrH/TusB family. In terms of assembly, heterohexamer, formed by a dimer of trimers. The hexameric TusBCD complex contains 2 copies each of TusB, TusC and TusD. The TusBCD complex interacts with TusE.

Its subcellular location is the cytoplasm. In terms of biological role, part of a sulfur-relay system required for 2-thiolation of 5-methylaminomethyl-2-thiouridine (mnm(5)s(2)U) at tRNA wobble positions. The polypeptide is Protein TusB (Escherichia coli O81 (strain ED1a)).